Consider the following 426-residue polypeptide: 26S proteasome regulatory subunit 7 homolog A (426 aa).

209–216 (GPPGTGKT) lines the ATP pocket. Glycyl lysine isopeptide (Lys-Gly) (interchain with G-Cter in ubiquitin) cross-links involve residues K400 and K415.

It belongs to the AAA ATPase family. Component of the 19S regulatory particle (RP/PA700) base subcomplex of the 26S proteasome. The 26S proteasome is composed of a core protease (CP), known as the 20S proteasome, capped at one or both ends by the 19S regulatory particle (RP/PA700). The RP/PA700 complex is composed of at least 17 different subunits in two subcomplexes, the base and the lid, which form the portions proximal and distal to the 20S proteolytic core, respectively.

It is found in the cytoplasm. Its subcellular location is the nucleus. Functionally, the 26S proteasome is involved in the ATP-dependent degradation of ubiquitinated proteins. The regulatory (or ATPase) complex confers ATP dependency and substrate specificity to the 26S complex. In Arabidopsis thaliana (Mouse-ear cress), this protein is 26S proteasome regulatory subunit 7 homolog A (RPT1A).